A 192-amino-acid chain; its full sequence is Large ribosomal subunit protein uL6 (192 aa).

This sequence belongs to the universal ribosomal protein uL6 family. As to quaternary structure, component of the large ribosomal subunit.

Its subcellular location is the cytoplasm. Its function is as follows. Component of the large ribosomal subunit. The ribosome is a large ribonucleoprotein complex responsible for the synthesis of proteins in the cell. This is Large ribosomal subunit protein uL6 (rpl9) from Ictalurus punctatus (Channel catfish).